A 379-amino-acid chain; its full sequence is Type II methyltransferase M.CvrRI (379 aa).

It belongs to the N(4)/N(6)-methyltransferase family.

It catalyses the reaction a 2'-deoxyadenosine in DNA + S-adenosyl-L-methionine = an N(6)-methyl-2'-deoxyadenosine in DNA + S-adenosyl-L-homocysteine + H(+). Functionally, a gamma subtype methylase, recognizes the double-stranded sequence 5'-TGCA-3', methylates A-4 on both strands, and protects the DNA from cleavage by the CviRI endonuclease. The sequence is that of Type II methyltransferase M.CvrRI (CVIRIM) from Chlorella (PBCV-XZ-6E).